A 28-amino-acid polypeptide reads, in one-letter code: M-poneritoxin-Da4b (28 aa).

Position 28 is an alanine amide (Ala-28).

As to expression, expressed by the venom gland.

Its subcellular location is the secreted. Functionally, the synthetic peptide has antimicrobial activity against the Gram-positive bacteria B.amyloliquefacies S499 (MIC=0.05 mM), L.monocytogenes 2231 and S.aureus ATCC 29213, against the Gram-negative bacteria P.putida BTP1, P.aeruginosa PaO1 and E.coli ATCC 10536, and against the fungi S.cerevisiae, R.mucilaginosa and C.cucumerinum. It is not active against the fungi F.oxysporum and B.cinerea. This Dinoponera australis (Giant neotropical hunting ant) protein is M-poneritoxin-Da4b.